The primary structure comprises 307 residues: Dihydroorotate dehydrogenase A (fumarate) (307 aa).

FMN-binding positions include Ser-21 and 46-47; that span reads KT. Substrate is bound by residues Lys-46, 70–74, and Asn-130; that span reads NSVGL. Asn-130 is a binding site for FMN. Residue Cys-133 is the Nucleophile of the active site. 2 residues coordinate FMN: Lys-168 and Ile-194. Substrate is bound at residue 195-196; sequence NT. FMN-binding positions include Gly-220, 246–247, and 268–269; these read GG and GS.

Belongs to the dihydroorotate dehydrogenase family. Type 1 subfamily. Homodimer. FMN serves as cofactor.

The protein localises to the cytoplasm. It catalyses the reaction (S)-dihydroorotate + fumarate = orotate + succinate. Its pathway is pyrimidine metabolism; UMP biosynthesis via de novo pathway. Functionally, catalyzes the conversion of dihydroorotate to orotate with fumarate as the electron acceptor. The chain is Dihydroorotate dehydrogenase A (fumarate) (pyrD) from Lactobacillus delbrueckii subsp. bulgaricus (strain ATCC 11842 / DSM 20081 / BCRC 10696 / JCM 1002 / NBRC 13953 / NCIMB 11778 / NCTC 12712 / WDCM 00102 / Lb 14).